We begin with the raw amino-acid sequence, 471 residues long: Alpha-galactosidase 6 (471 aa).

The first 18 residues, Met-1–Gly-18, serve as a signal peptide directing secretion. Cys-42 and Cys-74 are joined by a disulfide. Substrate is bound by residues Asp-72 and Asp-73. Asn-105 carries N-linked (GlcNAc...) asparagine glycosylation. An intrachain disulfide couples Cys-121 to Cys-151. A substrate-binding site is contributed by Lys-147. Asp-149 serves as the catalytic Nucleophile. A glycan (N-linked (GlcNAc...) asparagine) is linked at Asn-175. Position 205 (Arg-205) interacts with substrate. Catalysis depends on Asp-209, which acts as the Proton donor. 2 cysteine pairs are disulfide-bonded: Cys-221–Cys-237 and Cys-223–Cys-230. Gln-251 is a substrate binding site. N-linked (GlcNAc...) asparagine glycosylation is found at Asn-270, Asn-370, Asn-403, Asn-422, Asn-435, and Asn-454.

Belongs to the glycosyl hydrolase 27 family. As to quaternary structure, homotetramer.

It is found in the secreted. The enzyme catalyses Hydrolysis of terminal, non-reducing alpha-D-galactose residues in alpha-D-galactosides, including galactose oligosaccharides, galactomannans and galactolipids.. This chain is Alpha-galactosidase 6 (MEL6), found in Saccharomyces cerevisiae (Baker's yeast).